The following is a 27-amino-acid chain: Cupiennin-3b (27 aa).

Glu-27 bears the Glutamic acid 1-amide mark.

As to expression, expressed by the venom gland.

It is found in the secreted. The sequence is that of Cupiennin-3b from Cupiennius salei (American wandering spider).